The sequence spans 219 residues: MHLRAKPWATDWLAAHSDIVITQGRATEQIGQWQKLFAKAQPIHVEIGSGKGQFILGMALAHPEINYIGMEIQETAVAIAARKSFDQVGELPNLRYIYGNGNGVETYFEKAEVEKIYLNFSDPWPKTRHESRRLTYKTFLQSYEAVLPEHGEVEFKTDNRHLFEYSIVSFMNYGMRWATTDFTLDLHADAEKVIGNVETEYEQKFMAKGQPIYKIKAHF.

The S-adenosyl-L-methionine site is built by Glu-46, Glu-71, Asn-100, and Asp-122. The active site involves Asp-122. Residues Lys-126, Asp-158, and 199–202 each bind substrate; that span reads TEYE.

The protein belongs to the class I-like SAM-binding methyltransferase superfamily. TrmB family.

It carries out the reaction guanosine(46) in tRNA + S-adenosyl-L-methionine = N(7)-methylguanosine(46) in tRNA + S-adenosyl-L-homocysteine. The protein operates within tRNA modification; N(7)-methylguanine-tRNA biosynthesis. Functionally, catalyzes the formation of N(7)-methylguanine at position 46 (m7G46) in tRNA. The protein is tRNA (guanine-N(7)-)-methyltransferase of Leuconostoc citreum (strain KM20).